Here is a 379-residue protein sequence, read N- to C-terminus: MLCLLKLIVIPVILAPVGYPQGLPGLTVSSPQLRVHVGESVLMGCVVQRTEEKHVDRVDWLFSKDKDDASEYVLFYYSNLSVPTGRFQNRSHLVGDTFHNDGSLLLQDVQKADEGIYTCEIRLKNESMVMKKPVELWVLPEEPKDLRVRVGDTTQMRCSIQSTEEKRVTKVNWMFSSGSHTEEETVLSYDSNMRSGKFQSLGRFRNRVDLTGDISRNDGSIKLQTVKESDQGIYTCSIYVGKLESRKTIVLHVVQDEFQRTISPTPPTDKGQQGILNGNQLVIIVGIVCATFLLLPVLILIVKKAKWNKSSVSSMASVKSLENKEKINPEKHIYSSITTWETTERGISGESEGTYMTMNPVWPSSPKASSLVRSSVRSK.

The first 20 residues, 1–20, serve as a signal peptide directing secretion; sequence MLCLLKLIVIPVILAPVGYP. Topologically, residues 21-281 are extracellular; sequence QGLPGLTVSS…QQGILNGNQL (261 aa). Ig-like V-type domains lie at 24-135 and 140-250; these read PGLT…KPVE and PEEP…KTIV. The cysteines at positions 45 and 119 are disulfide-linked. N-linked (GlcNAc...) asparagine glycosylation is found at Asn-79, Asn-89, and Asn-125. Cys-158 and Cys-236 are disulfide-bonded. The helical transmembrane segment at 282–302 threads the bilayer; that stretch reads VIIVGIVCATFLLLPVLILIV. The Cytoplasmic segment spans residues 303 to 379; that stretch reads KKAKWNKSSV…SLVRSSVRSK (77 aa). Position 355 is a phosphotyrosine (Tyr-355).

This sequence belongs to the immunoglobulin superfamily. As to quaternary structure, homodimer; active form in leukocyte-endothelial cell adhesion. Interacts (homodimeric form) with CXADR. Interacts (via cytoplasmic domain) with the PI3 kinase; upon CXADR-binding. Interacts with ITGA4 and ITGB1; integrin alpha-4/beta-1 may regulate leukocyte to endothelial cells adhesion by controlling JAML homodimerization. Expressed by gamma-delta intraepithelial T cells (at protein level).

The protein resides in the cell membrane. It localises to the cell junction. Functionally, transmembrane protein of the plasma membrane of leukocytes that control their migration and activation through interaction with CXADR, a plasma membrane receptor found on adjacent epithelial and endothelial cells. The interaction between both receptors mediates the activation of gamma-delta T-cells, a subpopulation of T-cells residing in epithelia and involved in tissue homeostasis and repair. Upon epithelial CXADR-binding, JAML induces downstream cell signaling events in gamma-delta T-cells through PI3-kinase and MAP kinases. It results in proliferation and production of cytokines and growth factors by T-cells that in turn stimulate epithelial tissues repair. It also controls the transmigration of leukocytes within epithelial and endothelial tissues through adhesive interactions with epithelial and endothelial CXADR. The chain is Junctional adhesion molecule-like from Mus musculus (Mouse).